A 396-amino-acid polypeptide reads, in one-letter code: uncharacterized protein (396 aa).

Transmembrane regions (helical) follow at residues 27–47 (LLIACLFISGSLSIVVFQICL) and 69–89 (FIVLLCMILNMVAPSSLNVTF). An HXXXXD motif motif is present at residues 117 to 122 (HQMYAD). Helical transmembrane passes span 123–143 (WIYLWWLSFVSNLGGNVYIIL) and 372–392 (LTPRILSYYGFFAFLILVFVM).

Belongs to the 1-acyl-sn-glycerol-3-phosphate acyltransferase family.

It is found in the membrane. This is an uncharacterized protein from Saccharomyces cerevisiae (strain ATCC 204508 / S288c) (Baker's yeast).